A 570-amino-acid chain; its full sequence is Molecular chaperone MKKS (570 aa).

Position 192–199 (192–199 (GHIILGKS)) interacts with ATP. The tract at residues 198 to 370 (KSLIVPLKGQ…FHLIPNEATI (173 aa)) is substrate-binding apical domain.

This sequence belongs to the TCP-1 chaperonin family. Component of a complex composed at least of MKKS, BBS10, BBS12, TCP1, CCT2, CCT3, CCT4, CCT5 and CCT8. Interacts with STUB1. Interacts with BBS2 (via coiled coil domain). Interacts with CCDC28B. Interacts with BBS12. Interacts with SMARCC1, a component of the SWI/SNF complexes; the interaction takes place predominantly in the cytoplasm and may modulate SMARCC1 location. Interacts with DLEC1.

It is found in the cytoplasm. Its subcellular location is the cytoskeleton. The protein localises to the microtubule organizing center. It localises to the centrosome. The protein resides in the cytosol. It is found in the nucleus. Probable molecular chaperone that assists the folding of proteins upon ATP hydrolysis. Plays a role in the assembly of BBSome, a complex involved in ciliogenesis regulating transports vesicles to the cilia. May play a role in protein processing in limb, cardiac and reproductive system development. May play a role in cytokinesis. The protein is Molecular chaperone MKKS (MKKS) of Pongo abelii (Sumatran orangutan).